The following is a 73-amino-acid chain: Neurotoxin Cex13 (73 aa).

The signal sequence occupies residues 1–7; that stretch reads ATGNVWA. The region spanning 8 to 71 is the LCN-type CS-alpha/beta domain; the sequence is KDGYLVIIKT…TWPLPDKTCG (64 aa). 4 disulfide bridges follow: Cys-19-Cys-70, Cys-23-Cys-46, Cys-32-Cys-51, and Cys-36-Cys-53. Cys-70 carries the post-translational modification Cysteine amide. Positions 71-73 are excised as a propeptide; sequence GTK.

The protein belongs to the long (4 C-C) scorpion toxin superfamily. Sodium channel inhibitor family. Beta subfamily. As to expression, expressed by the venom gland.

It localises to the secreted. In terms of biological role, beta toxins bind voltage-independently at site-4 of sodium channels (Nav) and shift the voltage of activation toward more negative potentials thereby affecting sodium channel activation and promoting spontaneous and repetitive firing. The sequence is that of Neurotoxin Cex13 from Centruroides exilicauda (Bark scorpion).